A 472-amino-acid chain; its full sequence is Glutamyl-tRNA(Gln) amidotransferase subunit A (472 aa).

Catalysis depends on charge relay system residues K69 and S144. S168 serves as the catalytic Acyl-ester intermediate.

It belongs to the amidase family. GatA subfamily. As to quaternary structure, heterotrimer of A, B and C subunits.

The catalysed reaction is L-glutamyl-tRNA(Gln) + L-glutamine + ATP + H2O = L-glutaminyl-tRNA(Gln) + L-glutamate + ADP + phosphate + H(+). Its function is as follows. Allows the formation of correctly charged Gln-tRNA(Gln) through the transamidation of misacylated Glu-tRNA(Gln) in organisms which lack glutaminyl-tRNA synthetase. The reaction takes place in the presence of glutamine and ATP through an activated gamma-phospho-Glu-tRNA(Gln). This Sulfurisphaera tokodaii (strain DSM 16993 / JCM 10545 / NBRC 100140 / 7) (Sulfolobus tokodaii) protein is Glutamyl-tRNA(Gln) amidotransferase subunit A.